The following is a 104-amino-acid chain: MEDTSRCIDDVLKIGQQEKEIRQAEFSDAQGEREEVKCIDYTVDLEAGLPRHESSGKSNTLKQCYNAVLGFLEELIIVIIIVLLLYSLTMVGLFYVMTMTKFLF.

The helical transmembrane segment at 76-96 (IIVIIIVLLLYSLTMVGLFYV) threads the bilayer.

It localises to the vacuole membrane. The protein is Phosphate metabolism protein 6 (PHM6) of Saccharomyces cerevisiae (strain ATCC 204508 / S288c) (Baker's yeast).